We begin with the raw amino-acid sequence, 330 residues long: Malate dehydrogenase (330 aa).

Position 11–17 (11–17 (GGAGQIA)) interacts with NAD(+). Substrate is bound by residues arginine 92 and arginine 98. Residues asparagine 105, glutamine 112, and 129 to 131 (VGN) contribute to the NAD(+) site. 2 residues coordinate substrate: asparagine 131 and arginine 162. Catalysis depends on histidine 187, which acts as the Proton acceptor.

The protein belongs to the LDH/MDH superfamily. MDH type 2 family.

The catalysed reaction is (S)-malate + NAD(+) = oxaloacetate + NADH + H(+). In terms of biological role, catalyzes the reversible oxidation of malate to oxaloacetate. The chain is Malate dehydrogenase from Protochlamydia amoebophila (strain UWE25).